A 122-amino-acid polypeptide reads, in one-letter code: MIKKESKKEQRLRRHRRVRKKVFGTPERPRLCVFRSNKHIYAQIIDDTIGHTLVSASTLDPELREKLQKTWNVEAAKEVGLLIGKRALEKGIKKVVFDRGGYKYHGRVKALADGAREAGLEF.

The protein belongs to the universal ribosomal protein uL18 family. In terms of assembly, part of the 50S ribosomal subunit; part of the 5S rRNA/L5/L18/L25 subcomplex. Contacts the 5S and 23S rRNAs.

Its function is as follows. This is one of the proteins that bind and probably mediate the attachment of the 5S RNA into the large ribosomal subunit, where it forms part of the central protuberance. This chain is Large ribosomal subunit protein uL18, found in Thermotoga petrophila (strain ATCC BAA-488 / DSM 13995 / JCM 10881 / RKU-1).